A 215-amino-acid chain; its full sequence is Large ribosomal subunit protein uL4 (215 aa).

The interval 43-97 is disordered; sequence RRQGTHSTKTRAEVSGGGKKPWRQKGTGRARAGSTRSPIWVGGGKTHTPKPRDYS.

Belongs to the universal ribosomal protein uL4 family. Part of the 50S ribosomal subunit.

One of the primary rRNA binding proteins, this protein initially binds near the 5'-end of the 23S rRNA. It is important during the early stages of 50S assembly. It makes multiple contacts with different domains of the 23S rRNA in the assembled 50S subunit and ribosome. In terms of biological role, forms part of the polypeptide exit tunnel. This Brachyspira hyodysenteriae (strain ATCC 49526 / WA1) protein is Large ribosomal subunit protein uL4.